The sequence spans 85 residues: Toxin BmKT (85 aa).

The N-terminal stretch at 1-19 is a signal peptide; it reads MNYLVFFSLALLLMTGVES. The region spanning 21 to 83 is the LCN-type CS-alpha/beta domain; it reads RDGYIADDKN…VPIRVPGKCN (63 aa). Cystine bridges form between cysteine 31–cysteine 82, cysteine 35–cysteine 55, cysteine 41–cysteine 65, and cysteine 45–cysteine 67.

Belongs to the long (4 C-C) scorpion toxin superfamily. Sodium channel inhibitor family. Alpha subfamily. As to expression, expressed by the venom gland.

The protein localises to the secreted. Functionally, binds to sodium channels (Nav) and inhibits the inactivation of the activated channels, thereby blocking neuronal transmission. Tested on mice, has antitumor effect and strong inhibitory effect on pain. This Olivierus martensii (Manchurian scorpion) protein is Toxin BmKT.